The primary structure comprises 487 residues: Catalase (487 aa).

A disordered region spans residues 1 to 20 (MSQRVLTTESGAPVADNQNS). Residues histidine 54 and asparagine 127 contribute to the active site. Tyrosine 337 is a heme binding site.

The protein belongs to the catalase family. Heme is required as a cofactor.

It catalyses the reaction 2 H2O2 = O2 + 2 H2O. Its function is as follows. Decomposes hydrogen peroxide into water and oxygen; serves to protect cells from the toxic effects of hydrogen peroxide. This Streptomyces coelicolor (strain ATCC BAA-471 / A3(2) / M145) protein is Catalase (katA).